The sequence spans 218 residues: Histone H1 (218 aa).

Positions Met-1–Ala-19 are enriched in low complexity. 2 disordered regions span residues Met-1–Thr-42 and Val-89–Lys-218. Ser-2 carries the N-acetylserine modification. In terms of domain architecture, H15 spans Ala-37–Lys-110. 4 stretches are compositionally biased toward basic residues: residues Lys-118–Ala-133, Lys-141–Lys-158, Lys-166–Ala-184, and Lys-191–Lys-218.

It belongs to the histone H1/H5 family.

It localises to the nucleus. It is found in the chromosome. Histones H1 are necessary for the condensation of nucleosome chains into higher-order structures. This is Histone H1 from Gallus gallus (Chicken).